A 59-amino-acid chain; its full sequence is Large ribosomal subunit protein bL33 (59 aa).

The protein belongs to the bacterial ribosomal protein bL33 family.

In Prosthecochloris aestuarii (strain DSM 271 / SK 413), this protein is Large ribosomal subunit protein bL33.